The chain runs to 955 residues: 2-oxoglutarate dehydrogenase E1 component (955 aa).

The protein belongs to the alpha-ketoglutarate dehydrogenase family. In terms of assembly, homodimer. Part of the 2-oxoglutarate dehydrogenase (OGDH) complex composed of E1 (2-oxoglutarate dehydrogenase), E2 (dihydrolipoamide succinyltransferase) and E3 (dihydrolipoamide dehydrogenase); the complex contains multiple copies of the three enzymatic components (E1, E2 and E3). Requires thiamine diphosphate as cofactor.

The enzyme catalyses N(6)-[(R)-lipoyl]-L-lysyl-[protein] + 2-oxoglutarate + H(+) = N(6)-[(R)-S(8)-succinyldihydrolipoyl]-L-lysyl-[protein] + CO2. Its function is as follows. E1 component of the 2-oxoglutarate dehydrogenase (OGDH) complex which catalyzes the decarboxylation of 2-oxoglutarate, the first step in the conversion of 2-oxoglutarate to succinyl-CoA and CO(2). This Bacillus cereus (strain ATCC 10987 / NRS 248) protein is 2-oxoglutarate dehydrogenase E1 component.